We begin with the raw amino-acid sequence, 294 residues long: Nucleotide-binding protein Daud_0300 (294 aa).

11–18 (GLSGAGKT) is a binding site for ATP. 62-65 (DIRG) serves as a coordination point for GTP.

The protein belongs to the RapZ-like family.

Displays ATPase and GTPase activities. In Desulforudis audaxviator (strain MP104C), this protein is Nucleotide-binding protein Daud_0300.